The sequence spans 106 residues: Putative double-stranded DNA mimic protein VIBHAR_02752 (106 aa).

The protein belongs to the putative dsDNA mimic protein family.

Functionally, may act as a double-stranded DNA (dsDNA) mimic. Probably regulates the activity of a dsDNA-binding protein. The protein is Putative double-stranded DNA mimic protein VIBHAR_02752 of Vibrio campbellii (strain ATCC BAA-1116).